The sequence spans 249 residues: Small ribosomal subunit protein uS3 (249 aa).

Positions 39-109 (IRTYVLARLK…EVKIDVVEVV (71 aa)) constitute a KH type-2 domain. Basic and acidic residues predominate over residues 226–239 (KERRNDAGARNRDS). The segment at 226-249 (KERRNDAGARNRDSRTKRRHRTKR) is disordered. The span at 240 to 249 (RTKRRHRTKR) shows a compositional bias: basic residues.

The protein belongs to the universal ribosomal protein uS3 family. In terms of assembly, part of the 30S ribosomal subunit. Forms a tight complex with proteins S10 and S14.

In terms of biological role, binds the lower part of the 30S subunit head. Binds mRNA in the 70S ribosome, positioning it for translation. The protein is Small ribosomal subunit protein uS3 of Pelodictyon phaeoclathratiforme (strain DSM 5477 / BU-1).